Consider the following 1791-residue polypeptide: Brefeldin A-inhibited guanine nucleotide-exchange protein 2 (1791 aa).

At Met1 the chain carries N-acetylmethionine. The DCB; DCB:DCB domain and DCB:HUS domain interaction stretch occupies residues 2–224 (QESQTKSMFV…KPQSPVIQAT (223 aa)). Disordered stretches follow at residues 208-292 (LEKP…DNGA) and 311-350 (AAEKQGLPEPDQAPGVPECQECTVPPAVDENSQTNGIADD). Phosphoserine occurs at positions 214, 218, and 227. Polar residues predominate over residues 214-225 (SKPQSPVIQATA). Positions 233–243 (LKQSQAQSKPT) are enriched in polar residues. Phosphothreonine is present on Thr244. Residues 244 to 257 (TPEKTELPNGDHAR) are compositionally biased toward basic and acidic residues. Ser277 carries the phosphoserine modification. Phosphoserine occurs at positions 355 and 356. The tract at residues 515 to 535 (ADAQCVVDIYVNYDCDLNAAN) is HUS; DCB:HUS domain interaction. Ser621 carries the post-translational modification Phosphoserine. At Thr623 the chain carries Phosphothreonine. Ser624 is subject to Phosphoserine. Thr633 bears the Phosphothreonine mark. Residues 661–792 (FNKKPKRGIQ…IIMLTTDLHS (132 aa)) enclose the SEC7 domain. Ser707, Ser1518, Ser1520, Ser1521, Ser1532, Ser1535, Ser1541, and Ser1788 each carry phosphoserine.

In terms of assembly, homodimer. Interacts with ARFGEF1/BIG1; both proteins are probably part of the same or very similar macromolecular complexes. Interacts with PRKAR1A, PRKAR2A, PRKAR1B, PRKAR2B, PPP1CC, PDE3A, TNFRSF1A, MYCBP and EXOC7. Interacts with GABRB1, GABRB2 and GABRB3. In vitro phosphorylated by PKA reducing its GEF activity and dephosphorylated by phosphatase PP1. In terms of tissue distribution, expressed in brain (at protein level).

It localises to the cytoplasm. Its subcellular location is the membrane. The protein resides in the golgi apparatus. It is found in the perinuclear region. The protein localises to the trans-Golgi network. It localises to the endosome. Its subcellular location is the cytoskeleton. The protein resides in the microtubule organizing center. It is found in the centrosome. The protein localises to the cell projection. It localises to the dendrite. Its subcellular location is the cytoplasmic vesicle. The protein resides in the synapse. Inhibited by brefeldin A. Promotes guanine-nucleotide exchange on ARF1 and ARF3 and to a lower extent on ARF5 and ARF6. Promotes the activation of ARF1/ARF5/ARF6 through replacement of GDP with GTP. Involved in the regulation of Golgi vesicular transport. Required for the integrity of the endosomal compartment. Involved in trafficking from the trans-Golgi network (TGN) to endosomes and is required for membrane association of the AP-1 complex and GGA1. Seems to be involved in recycling of the transferrin receptor from recycling endosomes to the plasma membrane. Probably is involved in the exit of GABA(A) receptors from the endoplasmic reticulum. Involved in constitutive release of tumor necrosis factor receptor 1 via exosome-like vesicles; the function seems to involve PKA and specifically PRKAR2B. Proposed to act as A kinase-anchoring protein (AKAP) and may mediate crosstalk between Arf and PKA pathways. This is Brefeldin A-inhibited guanine nucleotide-exchange protein 2 (Arfgef2) from Rattus norvegicus (Rat).